The following is a 557-amino-acid chain: 2-isopropylmalate synthase (557 aa).

One can recognise a Pyruvate carboxyltransferase domain in the interval 33-307 (PIWCSSDLRD…DPQLDFSDID (275 aa)). Mg(2+)-binding residues include Asp-42, His-246, His-248, and Asn-282. Residues 439–557 (ANAPYALVSH…SLSQQEAKAA (119 aa)) are regulatory domain.

The protein belongs to the alpha-IPM synthase/homocitrate synthase family. LeuA type 2 subfamily. Homodimer. The cofactor is Mg(2+).

The protein resides in the cytoplasm. The catalysed reaction is 3-methyl-2-oxobutanoate + acetyl-CoA + H2O = (2S)-2-isopropylmalate + CoA + H(+). It functions in the pathway amino-acid biosynthesis; L-leucine biosynthesis; L-leucine from 3-methyl-2-oxobutanoate: step 1/4. Catalyzes the condensation of the acetyl group of acetyl-CoA with 3-methyl-2-oxobutanoate (2-ketoisovalerate) to form 3-carboxy-3-hydroxy-4-methylpentanoate (2-isopropylmalate). The polypeptide is 2-isopropylmalate synthase (Pseudomonas putida (strain GB-1)).